The following is a 1338-amino-acid chain: Thioester-containing protein 1 allele S3 (1338 aa).

Positions 1–21 (MWQFIRSRILTVIIFIGAAHG) are cleaved as a signal peptide. Residues asparagine 68, asparagine 199, asparagine 242, asparagine 312, and asparagine 481 are each glycosylated (N-linked (GlcNAc...) asparagine). Residues 580-609 (ENEFDIFHSLGLFARTLDDILFDSANEKTG) are may contain the cleavage site. Residues asparagine 637, asparagine 728, asparagine 813, and asparagine 828 are each glycosylated (N-linked (GlcNAc...) asparagine). A cross-link (isoglutamyl cysteine thioester (Cys-Gln)) is located at residues 859 to 862 (CGEQ). 3 cysteine pairs are disulfide-bonded: cysteine 1217–cysteine 1283, cysteine 1326–cysteine 1338, and cysteine 1329–cysteine 1334.

As to quaternary structure, heterodimer of a TEP1-N chain and an TEP1-C chain non-covalently linked. Forms a complex composed of TEP1-N and TEP1-C heterodimer, LRIM1 and APL1C; the interaction stabilizes TEP1-N and TEP1-C heterodimer, prevents its binding to tissues while circulating in the hemolymph and protects the thioester bond from hydrolysis. Mature TEP1 and to a lesser extent full-length TEP1 interact with SPCLIP1; the interaction is induced by microbial infection. In the hemolymph, the full-length protein is cleaved by an unknow protease into a 75kDa N-terminal (TEP1-N) chain and an 80kDa C-terminal (TEP1-C) chain which remain non-covalently linked. The TEP1-C chain contains the thioester bond which covalently binds to the pathogen surface. Cleavage is induced by bacterial infection or aseptic wound injury. During embryonic and pupal development, the cleaved form is the predominant form. Post-translationally, N-glycosylated.

It localises to the secreted. Its function is as follows. Plays an essential role in the innate immune response against bacteria, fungi and protozoa infection. After proteolytic cleavage, the protein C-terminus binds covalently through a thioester bond to the pathogen surface resulting in pathogen clearance either by melanization or lysis. Initiate the recruitment and activation of a cascade of proteases, mostly of CLIP-domain serine proteases, which leads to the proteolytic cleavage of the prophenoloxidase (PPO) into active phenoloxidase (PO), the rate-limiting enzyme in melanin biosynthesis. In response to parasite P.berghei-mediated infection, binds to and mediates killing of ookinetes, as they egress from midgut epithelial cells into the basal labyrinth, by both lysis and melanization. During bacterial infection, binds to both Gram-positive and Gram-negative bacteria but only promotes phagocytosis of Gram-negative bacteria. Promotes the accumulation of SPCLIP1 onto the surface of P.berghei ookinetes and bacterium E.coli which leads to the melanization of the pathogen. Recruits CLIPA2 to bacteria surface. In response to bacterial infection, required for periostial hemocyte aggregation, but not for the aggregation of sessile hemocytes in non-periostial regions. During the late stage of fungus B.bassiana-mediated infection, required for the initiation of hyphae melanization by binding to the surface of hyphae and recruiting prophenoloxidase PPO to them. Plays a role in male fertility by binding to defective sperm cells and promoting their removal during spermatogenesis. Binds to and mediates killing of parasite P.bergei ookinetes by lysis. Functionally, binds covalently through a thioester bond to the pathogen surface resulting in pathogen clearance. In Anopheles gambiae (African malaria mosquito), this protein is Thioester-containing protein 1 allele S3.